The primary structure comprises 371 residues: Spermidine/putrescine import ATP-binding protein PotA (371 aa).

Residues 10-240 (VELRNVTKSY…PKNLFVARFI (231 aa)) form the ABC transporter domain. 42–49 (GPSGCGKT) is a binding site for ATP.

Belongs to the ABC transporter superfamily. Spermidine/putrescine importer (TC 3.A.1.11.1) family. The complex is composed of two ATP-binding proteins (PotA), two transmembrane proteins (PotB and PotC) and a solute-binding protein (PotD).

It localises to the cell inner membrane. The catalysed reaction is ATP + H2O + polyamine-[polyamine-binding protein]Side 1 = ADP + phosphate + polyamineSide 2 + [polyamine-binding protein]Side 1.. Part of the ABC transporter complex PotABCD involved in spermidine/putrescine import. Responsible for energy coupling to the transport system. This Haemophilus ducreyi (strain 35000HP / ATCC 700724) protein is Spermidine/putrescine import ATP-binding protein PotA.